Here is a 229-residue protein sequence, read N- to C-terminus: 4-hydroxy-tetrahydrodipicolinate reductase (229 aa).

Residues 10 to 15 (GSAGRM), 78 to 80 (GTT), and 102 to 105 (SSNM) contribute to the NAD(+) site. The active-site Proton donor/acceptor is the histidine 133. Histidine 134 provides a ligand contact to (S)-2,3,4,5-tetrahydrodipicolinate. The Proton donor role is filled by lysine 137. 143–144 (GT) serves as a coordination point for (S)-2,3,4,5-tetrahydrodipicolinate.

The protein belongs to the DapB family.

It localises to the cytoplasm. It catalyses the reaction (S)-2,3,4,5-tetrahydrodipicolinate + NAD(+) + H2O = (2S,4S)-4-hydroxy-2,3,4,5-tetrahydrodipicolinate + NADH + H(+). It carries out the reaction (S)-2,3,4,5-tetrahydrodipicolinate + NADP(+) + H2O = (2S,4S)-4-hydroxy-2,3,4,5-tetrahydrodipicolinate + NADPH + H(+). It functions in the pathway amino-acid biosynthesis; L-lysine biosynthesis via DAP pathway; (S)-tetrahydrodipicolinate from L-aspartate: step 4/4. Catalyzes the conversion of 4-hydroxy-tetrahydrodipicolinate (HTPA) to tetrahydrodipicolinate. In Bdellovibrio bacteriovorus (strain ATCC 15356 / DSM 50701 / NCIMB 9529 / HD100), this protein is 4-hydroxy-tetrahydrodipicolinate reductase.